Consider the following 224-residue polypeptide: UPF0758 protein Lm4b_01560 (224 aa).

The region spanning 102–224 is the MPN domain; it reads VVRCPEDAVK…YISLKEKGYF (123 aa). 3 residues coordinate Zn(2+): His173, His175, and Asp186. A JAMM motif motif is present at residues 173–186; sequence HNHPSGDPTPSSED.

Belongs to the UPF0758 family.

This Listeria monocytogenes serotype 4b (strain CLIP80459) protein is UPF0758 protein Lm4b_01560.